Consider the following 914-residue polypeptide: DENN domain-containing protein 2C (914 aa).

The tract at residues 46–98 is disordered; it reads FGVRYNCHQESPPHKRPTGEERNGALPRNTDVKSRDQSEDEGEGGECRGSHPS. The span at 56-68 shows a compositional bias: basic and acidic residues; that stretch reads SPPHKRPTGEERN. Ser261 carries the post-translational modification Phosphoserine. The interval 411 to 446 is disordered; it reads GKKRVKLQPYTGKEAPSSKGETSGNESDAEYLPKNR. Residues 480–627 form the uDENN domain; the sequence is ELFVVVSLQK…PFPAPGRTIT (148 aa). The 134-residue stretch at 649 to 782 folds into the cDENN domain; sequence RLEHVDFECL…LQAALVQILE (134 aa). The 91-residue stretch at 784-874 folds into the dDENN domain; sequence RDEVLAQEQQ…QDRELRQSGV (91 aa).

Its function is as follows. Guanine nucleotide exchange factor (GEF) which may activate RAB9A and RAB9B. Promotes the exchange of GDP to GTP, converting inactive GDP-bound Rab proteins into their active GTP-bound form. The polypeptide is DENN domain-containing protein 2C (Dennd2c) (Mus musculus (Mouse)).